A 418-amino-acid chain; its full sequence is MIHSLFLINCSGDIFLEKHWKSVVSQSVCDYFFEAQEKAADVENVPPVISTPHHYLISIYRDKLFFVSVIQTEVPPLFVIEFLHRVADTFQDYFGECSEAAIKDNVVIVYELLEEMLDNGFPLATESNILKELIKPPTILRSVVNSITGSSNVGDTLPTGQLSNIPWRRAGVKYTNNEAYFDVVEEIDAIIDKSGSTVFAEIQGVIDACIKLSGMPDLSLSFMNPRLLDDVSFHPCIRFKRWESERVLSFIPPDGNFRLISYRVSSQNLVAIPVYVKHSISFKENSSCGRFDITIGPKQNMGKTIEGITVTVHMPKVVLNMNLTPTQGSYTFDPVTKVLTWDVGKITPQKLPSLKGLVNLQSGAPKPEENPSLNIQFKIQQLAISGLKVNRLDMYGEKYKPFKGVKYVTKAGKFQVRT.

An MHD domain is found at 176–417 (NNEAYFDVVE…VTKAGKFQVR (242 aa)).

This sequence belongs to the adaptor complexes medium subunit family. In terms of assembly, adaptor protein complex 3 (AP-3) is a heterotetramer composed of two large adaptins (delta-type subunit AP3D1 and beta-type subunit AP3B1 or AP3B2), a medium adaptin (mu-type subunit AP3M1 or AP3M2) and a small adaptin (sigma-type subunit APS1 or AP3S2). Interacts with AGAP1. AP-3 associates with the BLOC-1 complex. (Microbial infection) Interacts with human respiratory virus (HRSV) matrix protein; this interaction plays an essential role in trafficking the matrix protein in host cells.

It localises to the golgi apparatus. Its subcellular location is the cytoplasmic vesicle membrane. Its function is as follows. Part of the AP-3 complex, an adaptor-related complex which is not clathrin-associated. The complex is associated with the Golgi region as well as more peripheral structures. It facilitates the budding of vesicles from the Golgi membrane and may be directly involved in trafficking to lysosomes. In concert with the BLOC-1 complex, AP-3 is required to target cargos into vesicles assembled at cell bodies for delivery into neurites and nerve terminals. This chain is AP-3 complex subunit mu-1 (AP3M1), found in Homo sapiens (Human).